A 247-amino-acid polypeptide reads, in one-letter code: Probable transcriptional regulatory protein DvMF_3201 (247 aa).

Residues 1 to 21 (MAGHSKWANIQHRKGRQDAKR) form a disordered region.

This sequence belongs to the TACO1 family.

It localises to the cytoplasm. In Nitratidesulfovibrio vulgaris (strain DSM 19637 / Miyazaki F) (Desulfovibrio vulgaris), this protein is Probable transcriptional regulatory protein DvMF_3201.